The primary structure comprises 434 residues: Trigger factor (434 aa).

Positions 160 to 245 (GDKAKINFVG…LNEVQAANLP (86 aa)) constitute a PPIase FKBP-type domain.

This sequence belongs to the FKBP-type PPIase family. Tig subfamily.

The protein resides in the cytoplasm. It carries out the reaction [protein]-peptidylproline (omega=180) = [protein]-peptidylproline (omega=0). Involved in protein export. Acts as a chaperone by maintaining the newly synthesized protein in an open conformation. Functions as a peptidyl-prolyl cis-trans isomerase. The polypeptide is Trigger factor (Shewanella woodyi (strain ATCC 51908 / MS32)).